A 125-amino-acid chain; its full sequence is Small ribosomal subunit protein eS8 (125 aa).

The interval 1–35 (MQWQGRSVRKPSGGRYHTSQGKKRTEIGRAPAETH) is disordered.

The protein belongs to the eukaryotic ribosomal protein eS8 family. In terms of assembly, part of the 30S ribosomal subunit.

This chain is Small ribosomal subunit protein eS8, found in Methanoculleus marisnigri (strain ATCC 35101 / DSM 1498 / JR1).